The sequence spans 203 residues: Endo-type membrane-bound lytic murein transglycosylase A (203 aa).

The N-terminal stretch at 1–15 (MKLRWFAFLVVILAG) is a signal peptide. C16 carries N-palmitoyl cysteine lipidation. C16 is lipidated: S-diacylglycerol cysteine.

It belongs to the transglycosylase Slt family.

The protein resides in the cell outer membrane. It catalyses the reaction Endolytic cleavage of the (1-&gt;4)-beta-glycosidic linkage between N-acetylmuramic acid (MurNAc) and N-acetylglucosamine (GlcNAc) residues in peptidoglycan with concomitant formation of a 1,6-anhydrobond in the MurNAc residue.. Murein-degrading enzyme. May play a role in recycling of muropeptides during cell elongation and/or cell division. Preferentially cleaves at a distance of more than two disaccharide units from the ends of the glycan chain. The sequence is that of Endo-type membrane-bound lytic murein transglycosylase A from Salmonella paratyphi C (strain RKS4594).